Reading from the N-terminus, the 92-residue chain is Small nuclear ribonucleoprotein E (92 aa).

The Sm domain maps to 18–92; it reads INLIFRYLQN…NITLLQSVSN (75 aa).

This sequence belongs to the snRNP Sm proteins family. As to quaternary structure, core component of the spliceosomal U1, U2, U4 and U5 small nuclear ribonucleoproteins (snRNPs), the building blocks of the spliceosome. Most spliceosomal snRNPs contain a common set of Sm proteins, snrpb, snrpd1, snrpd2, snrpd3, snrpe, snrpf and snrpg that assemble in a heptameric protein ring on the Sm site of the small nuclear RNA to form the core snRNP. Component of the U1 snRNP. The U1 snRNP is composed of the U1 snRNA and the 7 core Sm proteins snrpb, snrpd1, snrpd2, snrpd3, snrpe, snrpf and snrpg, and at least three U1 snRNP-specific proteins snrnp70/u1-70k, snrpa/u1-a and snrpc/u1-c. Component of the U4/U6-U5 tri-snRNP complex composed of the U4, U6 and U5 snRNAs and at least prpf3, prpf4, prpf6, prpf8, prpf31, snrnp200, txnl4a, snrnp40, snrpb, snrpd1, snrpd2, snrpd3, snrpe, snrpf, snrpg, ddx23, cd2bp2, ppih, snu13, eftud2, sart1 and usp39, plus lsm2, lsm3, lsm4, lsm5, lsm6, lsm7 and lsm8. Component of the U7 snRNP complex, or U7 Sm protein core complex, that is composed of the U7 snRNA and at least lsm10, lsm11, snrpb, snrpd3, snrpe, snrpf and snrpg; the complex does not contain snrpd1 and snrpd2. Component of the minor spliceosome, which splices U12-type introns. Part of the SMN-Sm complex that contains smn1, gemin2/sip1, ddx20/gemin3, gemin4, gemin5, gemin6, gemin7, gemin8, strap/unrip and the Sm proteins snrpb, snrpd1, snrpd2, snrpd3, snrpe, snrpf and snrpg; catalyzes core snRNPs assembly. Forms a 6S pICln-Sm complex composed of clns1a/pICln, snrpd1, snrpd2, snrpe, snrpf and snrpg; ring-like structure where clns1a/pICln mimics additional Sm proteins and which is unable to assemble into the core snRNP.

It is found in the cytoplasm. Its subcellular location is the cytosol. The protein localises to the nucleus. Its function is as follows. Plays a role in pre-mRNA splicing as a core component of the spliceosomal U1, U2, U4 and U5 small nuclear ribonucleoproteins (snRNPs), the building blocks of the spliceosome. Component of both the pre-catalytic spliceosome B complex and activated spliceosome C complexes. As a component of the minor spliceosome, involved in the splicing of U12-type introns in pre-mRNAs. As part of the U7 snRNP it is involved in histone 3'-end processing. The protein is Small nuclear ribonucleoprotein E (snrpe) of Danio rerio (Zebrafish).